The chain runs to 208 residues: Methyl-CpG-binding domain protein 3-like 2 (208 aa).

The interval 1–89 (MGEPAFTSFP…HLEKPQQLCA (89 aa)) is interacts with MBD3.

It belongs to the MBD3L family. In terms of assembly, interacts (via N-terminus) with MBD3; the interaction is direct. Interacts with MTA1. Interacts with HDAC1. Interacts with HDAC2. Interacts with RBBP4. Interacts with RBBP7. In terms of tissue distribution, detected at low levels in several somatic tissues. Highly expressed in the ovarian teratocarcinoma cell line PA-1.

The protein localises to the nucleus. Functionally, may displace the NuRD complex from chromatin. The polypeptide is Methyl-CpG-binding domain protein 3-like 2 (MBD3L2) (Homo sapiens (Human)).